Reading from the N-terminus, the 20-residue chain is MNKKSIRNVNLKGKRVFDRV.

A disordered region spans residues 1–20; the sequence is MNKKSIRNVNLKGKRVFDRV.

The protein belongs to the phosphoglycerate kinase family. Monomer.

Its subcellular location is the cytoplasm. It catalyses the reaction (2R)-3-phosphoglycerate + ATP = (2R)-3-phospho-glyceroyl phosphate + ADP. The protein operates within carbohydrate degradation; glycolysis; pyruvate from D-glyceraldehyde 3-phosphate: step 2/5. This chain is Phosphoglycerate kinase, found in Bacillus cereus.